A 394-amino-acid polypeptide reads, in one-letter code: Chorismate synthase (394 aa).

Arg48 is a binding site for NADP(+). The segment at 52-90 is disordered; that stretch reads QSMITTSRGEPDEVSIQSGLQDGYTTGTPIGMTIENKDA. Over residues 66-79 the composition is skewed to polar residues; that stretch reads SIQSGLQDGYTTGT. Residues 125–127, Gly297, 312–316, and Arg339 contribute to the FMN site; these read RSS and HAPTS.

It belongs to the chorismate synthase family. FMNH2 serves as cofactor.

It catalyses the reaction 5-O-(1-carboxyvinyl)-3-phosphoshikimate = chorismate + phosphate. The protein operates within metabolic intermediate biosynthesis; chorismate biosynthesis; chorismate from D-erythrose 4-phosphate and phosphoenolpyruvate: step 7/7. Functionally, catalyzes the anti-1,4-elimination of the C-3 phosphate and the C-6 proR hydrogen from 5-enolpyruvylshikimate-3-phosphate (EPSP) to yield chorismate, which is the branch point compound that serves as the starting substrate for the three terminal pathways of aromatic amino acid biosynthesis. This reaction introduces a second double bond into the aromatic ring system. The protein is Chorismate synthase of Halobacterium salinarum (strain ATCC 700922 / JCM 11081 / NRC-1) (Halobacterium halobium).